The following is a 147-amino-acid chain: Putative cystatin-9-like protein CST9LP1 (147 aa).

The signal sequence occupies residues 1 to 28 (MWSLPPSRALSCAPLLLLFSFQFLVTYA). An intrachain disulfide couples Cys-98 to Cys-108. 2 N-linked (GlcNAc...) asparagine glycosylation sites follow: Asn-117 and Asn-139. Cysteines 122 and 142 form a disulfide.

The protein belongs to the cystatin family.

Its subcellular location is the secreted. This chain is Putative cystatin-9-like protein CST9LP1 (CST9LP1), found in Homo sapiens (Human).